A 511-amino-acid polypeptide reads, in one-letter code: UDP-N-acetylmuramate--L-alanine ligase (511 aa).

An ATP-binding site is contributed by 127–133 (GTHGKTT). Residues 481 to 511 (VGTVPGGEVGGATTIGGTVPGGSAPGASAAG) are disordered. A compositionally biased stretch (gly residues) spans 484-504 (VPGGEVGGATTIGGTVPGGSA).

Belongs to the MurCDEF family.

The protein localises to the cytoplasm. It catalyses the reaction UDP-N-acetyl-alpha-D-muramate + L-alanine + ATP = UDP-N-acetyl-alpha-D-muramoyl-L-alanine + ADP + phosphate + H(+). It participates in cell wall biogenesis; peptidoglycan biosynthesis. In terms of biological role, cell wall formation. The protein is UDP-N-acetylmuramate--L-alanine ligase of Salinispora arenicola (strain CNS-205).